A 478-amino-acid polypeptide reads, in one-letter code: H(+)/Cl(-) exchange transporter ClcA (478 aa).

Over 1 to 32 the chain is Cytoplasmic; the sequence is MTHSTQQLSPEGVAEGKRGRLIRELVNRDKTP. The helical transmembrane segment at 33 to 69 threads the bilayer; the sequence is LIILIMAAVVGVVTGLLGVAFDRGVDWVQQQRLLALA. Residues 70-76 lie on the Periplasmic side of the membrane; that stretch reads NVADYAL. The chain crosses the membrane as a helical span at residues 77–100; that stretch reads LVWPLAFIMSALLAMMGYFLVSRF. Residues 106 to 110 carry the Selectivity filter part_1 motif; it reads GSGIP. Ser107 lines the chloride pocket. An intramembrane region (helical) is located at residues 109 to 116; that stretch reads IPEIEGAM. Over 117 to 123 the chain is Cytoplasmic; that stretch reads EEMRPVR. 2 helical membrane passes run 124 to 141 and 148 to 166; these read WWRV…TLGA and EGPM…VDIF. Positions 146-150 match the Selectivity filter part_2 motif; the sequence is GREGP. At 167-176 the chain is on the cytoplasmic side; it reads RLRSPEARHS. Intramembrane regions (helical) lie at residues 177–189 and 193–201; these read LLAT…LSAA and PLAGILFVI. Residues 202–214 lie on the Cytoplasmic side of the membrane; that stretch reads EEMRSQFRYSLVS. A helical membrane pass occupies residues 215–232; it reads IKAVFIGVITSTIVYRYF. The Periplasmic segment spans residues 233-252; it reads NGERAIIEVGKLSDAPLNTL. Residues 253–281 form a helical membrane-spanning segment; the sequence is WLYLLLGIIFGAVGVIFNALIFRTQDMFV. At 282 to 287 the chain is on the cytoplasmic side; it reads RFHGGD. Residues 288-309 form a helical membrane-spanning segment; the sequence is WRKLVLIGGLLGGMCGLLALLH. The Periplasmic portion of the chain corresponds to 310-329; that stretch reads GNAVGGGFALIPIAAAGNFS. 2 consecutive transmembrane segments (helical) span residues 330–349 and 355–376; these read IGML…LCFG and GIFA…LSCA. Positions 355-359 match the Selectivity filter part_3 motif; it reads GIFAP. Ile356 and Phe357 together coordinate chloride. At 377-386 the chain is on the periplasmic side; that stretch reads HFFPQYGIEA. The helical intramembrane region spans 387–401; it reads GTFAIAGMGALFAAS. An intramembrane region (note=Loop between two helices) is located at residues 402 to 404; that stretch reads VRA. Positions 405–416 form an intramembrane region, helical; the sequence is PLTGIVLVLEMT. The note=Loop between two helices intramembrane region spans 417–421; that stretch reads DNYQL. A helical membrane pass occupies residues 422-438; sequence ILPMIVTCLGATLIAQF. Over 439 to 478 the chain is Cytoplasmic; that stretch reads MGGKPLYSAILARTLAKQEQARATVIAQEPAVENTPQIGK. Residue Tyr445 participates in chloride binding.

Belongs to the chloride channel (TC 2.A.49) family. ClcA subfamily. In terms of assembly, homodimer.

The protein localises to the cell inner membrane. It carries out the reaction 2 chloride(in) + H(+)(out) = 2 chloride(out) + H(+)(in). In terms of biological role, proton-coupled chloride transporter. Functions as antiport system and exchanges two chloride ions for 1 proton. Probably acts as an electrical shunt for an outwardly-directed proton pump that is linked to amino acid decarboxylation, as part of the extreme acid resistance (XAR) response. The sequence is that of H(+)/Cl(-) exchange transporter ClcA from Yersinia pestis bv. Antiqua (strain Antiqua).